We begin with the raw amino-acid sequence, 444 residues long: N-succinylarginine dihydrolase (444 aa).

Substrate is bound by residues 19–28, Asn110, and 137–138; these read AGLSFGNVAS and HR. Glu174 is a catalytic residue. Arg214 lines the substrate pocket. The active site involves His250. Positions 252 and 362 each coordinate substrate. Cys368 (nucleophile) is an active-site residue.

This sequence belongs to the succinylarginine dihydrolase family. In terms of assembly, homodimer.

The enzyme catalyses N(2)-succinyl-L-arginine + 2 H2O + 2 H(+) = N(2)-succinyl-L-ornithine + 2 NH4(+) + CO2. It participates in amino-acid degradation; L-arginine degradation via AST pathway; L-glutamate and succinate from L-arginine: step 2/5. In terms of biological role, catalyzes the hydrolysis of N(2)-succinylarginine into N(2)-succinylornithine, ammonia and CO(2). This is N-succinylarginine dihydrolase from Shewanella baltica (strain OS185).